The following is a 295-amino-acid chain: 4-hydroxy-tetrahydrodipicolinate synthase (295 aa).

Pyruvate is bound at residue threonine 47. Tyrosine 135 acts as the Proton donor/acceptor in catalysis. Lysine 163 serves as the catalytic Schiff-base intermediate with substrate. Isoleucine 206 contacts pyruvate.

It belongs to the DapA family. Homodimer.

Its subcellular location is the cytoplasm. It catalyses the reaction L-aspartate 4-semialdehyde + pyruvate = (2S,4S)-4-hydroxy-2,3,4,5-tetrahydrodipicolinate + H2O + H(+). It functions in the pathway amino-acid biosynthesis; L-lysine biosynthesis via DAP pathway; (S)-tetrahydrodipicolinate from L-aspartate: step 3/4. Catalyzes the condensation of (S)-aspartate-beta-semialdehyde [(S)-ASA] and pyruvate to 4-hydroxy-tetrahydrodipicolinate (HTPA). The polypeptide is 4-hydroxy-tetrahydrodipicolinate synthase (Staphylococcus saprophyticus subsp. saprophyticus (strain ATCC 15305 / DSM 20229 / NCIMB 8711 / NCTC 7292 / S-41)).